Here is an 89-residue protein sequence, read N- to C-terminus: Small ribosomal subunit protein uS15 (89 aa).

Basic and acidic residues predominate over residues 1-21; the sequence is MALTTEEKKQVLSEYGLHETD. The interval 1-24 is disordered; it reads MALTTEEKKQVLSEYGLHETDTGS.

This sequence belongs to the universal ribosomal protein uS15 family. Part of the 30S ribosomal subunit. Forms a bridge to the 50S subunit in the 70S ribosome, contacting the 23S rRNA.

Its function is as follows. One of the primary rRNA binding proteins, it binds directly to 16S rRNA where it helps nucleate assembly of the platform of the 30S subunit by binding and bridging several RNA helices of the 16S rRNA. Functionally, forms an intersubunit bridge (bridge B4) with the 23S rRNA of the 50S subunit in the ribosome. The polypeptide is Small ribosomal subunit protein uS15 (Rhodococcus jostii (strain RHA1)).